A 513-amino-acid chain; its full sequence is Ribonuclease Y (513 aa).

A helical membrane pass occupies residues 6-26; sequence YIIIAVVIIIICVILGLYIVD. The KH domain maps to 203-288; the sequence is TVHVVNLPND…EMVEKAKKEV (86 aa). Residues 329-422 enclose the HD domain; it reads VLKHSIEVSH…VQAADAISAA (94 aa).

Belongs to the RNase Y family.

The protein localises to the cell membrane. Its function is as follows. Endoribonuclease that initiates mRNA decay. In Clostridium botulinum (strain ATCC 19397 / Type A), this protein is Ribonuclease Y.